Here is a 325-residue protein sequence, read N- to C-terminus: Inner membrane protein YrbG (325 aa).

The Periplasmic portion of the chain corresponds to M1–T5. The chain crosses the membrane as a helical span at residues A6–A26. Topologically, residues S27 to P37 are cytoplasmic. Residues L38–L58 traverse the membrane as a helical segment. The Periplasmic segment spans residues A59 to D67. A helical transmembrane segment spans residues L68–A88. The Cytoplasmic segment spans residues A89 to E104. The chain crosses the membrane as a helical span at residues L105–S125. A topological domain (periplasmic) is located at residue R126. A helical transmembrane segment spans residues S127–A147. The Cytoplasmic portion of the chain corresponds to R148 to D169. The chain crosses the membrane as a helical span at residues G170–T190. Topologically, residues R191–T198 are periplasmic. A helical transmembrane segment spans residues V199–G219. Topologically, residues T220–N243 are cytoplasmic. Residues I244–P264 form a helical membrane-spanning segment. The Periplasmic portion of the chain corresponds to G265 to P269. Residues L270–C290 traverse the membrane as a helical segment. Residues W291–G302 lie on the Cytoplasmic side of the membrane. Residues V303 to L323 traverse the membrane as a helical segment. Over V324–E325 the chain is Periplasmic.

The protein belongs to the Ca(2+):cation antiporter (CaCA) (TC 2.A.19) family.

It localises to the cell inner membrane. The chain is Inner membrane protein YrbG (yrbG) from Escherichia coli (strain K12).